The sequence spans 689 residues: Chloride channel protein ClC-Kb (689 aa).

Residues 1-51 (MSRVLVIEQREGEEKTLIQKHIFRPFPNTRRVVIDHLQRLKNFLFRIGDDW) lie on the Cytoplasmic side of the membrane. The next 2 membrane-spanning stretches (helical) occupy residues 52–83 (YFLFALGVIMALISFTMDFTVSKMLNAHRWLQ) and 92–112 (LRYLSWIVYPIALVAFSTGFA). The helical intramembrane region spans 117 to 128 (PHSGGSGIPELK). Serine 122 contributes to the chloride binding site. 2 consecutive transmembrane segments (helical) span residues 142-161 (IKNFGAKVVGLTCTLSAGST) and 162-181 (MFLGKVGPFVHLSSMIAAYL). The N-linked (GlcNAc...) asparagine glycan is linked to asparagine 194. The helical intramembrane region spans 204 to 225 (AAAAVGVSTVFGAPISGVLFSV). The chain crosses the membrane as a helical span at residues 237 to 256 (YWRGFFAATCGAFVFRLLAV). Residues glutamate 260, glutamate 262, aspartate 279, and glutamate 282 each contribute to the Ca(2+) site. The next 2 membrane-spanning stretches (helical) occupy residues 283–311 (MFFFAILGVVCGLIGCAYLFCQRWLLGYV) and 326–343 (PMYSALVALLISSITFPE). Residues 350–361 (ASRLTMKELLTS) constitute an intramembrane region (helical). The next 2 membrane-spanning stretches (helical) occupy residues 402 to 422 (GTLAFFIIMKFWMFILATTLP) and 423 to 442 (MPAGYFMPVFVFGAAIGRLV). Chloride is bound at residue phenylalanine 428. The helical intramembrane region spans 466 to 498 (GGYAWQGAPAYSGAVTHSVSTALLAFEATGQIA). Residues 502-522 (PVILCVLIANAFTQKLQPSFY) form a helical membrane-spanning segment. The Cytoplasmic segment spans residues 523–689 (DGTIIVKKLP…KAIEDLANPK (167 aa)). 2 consecutive CBS domains span residues 553-613 (MNPD…SHER) and 630-689 (ACSI…ANPK).

The protein belongs to the chloride channel (TC 2.A.49) family. In terms of processing, N-glycosylated on a single asparagine, probably Asn-365 or Asn-375. As to expression, expressed in two distinct regions of the kidney; the proximal convoluted tubule and the diluting segment.

It localises to the cell membrane. Its function is as follows. Voltage-gated chloride channel. Chloride channels have several functions including the regulation of cell volume, the stabilization of membrane potential, signal transduction and transepithelial transport. The protein is Chloride channel protein ClC-Kb (clcnkb) of Xenopus laevis (African clawed frog).